The primary structure comprises 252 residues: Probable transcriptional regulatory protein DSY2470 (252 aa).

The protein belongs to the TACO1 family.

The protein localises to the cytoplasm. The sequence is that of Probable transcriptional regulatory protein DSY2470 from Desulfitobacterium hafniense (strain Y51).